A 537-amino-acid polypeptide reads, in one-letter code: Multidrug resistance protein Stp (537 aa).

The next 14 helical transmembrane spans lie at 6–26 (LLTLIATGLGLFMIFLDALIV), 46–66 (WVVASYSLGMAVFIMSAATLA), 77–97 (IGVSLFTLGSIACGLAPSIAV), 104–124 (AQGLGAAAVSVTSLALVSAAF), 136–156 (IWTAIASIGTTTGPTLGGLLV), 163–183 (SIFYVNLPMGALVLFLTLCYV), 200–220 (LLFIVAVGALVYAVIEGPQIG), 223–243 (SVQTIVMLWTAAVGCALFVWL), 262–282 (YALAIATICTVFFAVYGMLLL), 300–320 (LMILPFSAAVAIVSPLVGHLV), 327–347 (VPILAGLCMLMLGLLMLIFSE), 352–372 (ALVLVGLGLCGSGVALCLTPI), 397–417 (AIGSTIGFAVLGSVLAAWLSA), and 478–498 (VALLVATATLAVVFLAGWRWF).

It belongs to the major facilitator superfamily. EmrB family.

It localises to the cell membrane. In Mycobacterium tuberculosis (strain CDC 1551 / Oshkosh), this protein is Multidrug resistance protein Stp (stp).